We begin with the raw amino-acid sequence, 376 residues long: Cytochrome b (376 aa).

Transmembrane regions (helical) follow at residues 28-48 (YGFL…FLAS), 72-94 (WCFR…LHIL), 107-127 (SWIS…IGYV), and 169-189 (FFVL…IHIF). Residues His-78 and His-92 each coordinate heme b. The heme b site is built by His-173 and His-187. His-192 provides a ligand contact to a ubiquinone. Helical transmembrane passes span 214–234 (LLSL…IQSI), 274–294 (IPSK…LFLL), 317–337 (VPII…CQLP), and 340–360 (IFIL…LFAL).

Belongs to the cytochrome b family. In terms of assembly, the main subunits of complex b-c1 are: cytochrome b, cytochrome c1 and the Rieske protein. Heme b is required as a cofactor.

The protein localises to the mitochondrion inner membrane. In terms of biological role, component of the ubiquinol-cytochrome c reductase complex (complex III or cytochrome b-c1 complex) that is part of the mitochondrial respiratory chain. The b-c1 complex mediates electron transfer from ubiquinol to cytochrome c. Contributes to the generation of a proton gradient across the mitochondrial membrane that is then used for ATP synthesis. This chain is Cytochrome b (MT-CYB), found in Plasmodium chabaudi.